A 105-amino-acid chain; its full sequence is Translation initiation factor 1A (105 aa).

The 76-residue stretch at 12–87 (TRVRTPREEN…QKCDIIWRYT (76 aa)) folds into the S1-like domain.

This sequence belongs to the eIF-1A family.

Its function is as follows. Seems to be required for maximal rate of protein biosynthesis. Enhances ribosome dissociation into subunits and stabilizes the binding of the initiator Met-tRNA(I) to 40 S ribosomal subunits. The polypeptide is Translation initiation factor 1A (eIF1A) (Methanococcus aeolicus (strain ATCC BAA-1280 / DSM 17508 / OCM 812 / Nankai-3)).